Consider the following 81-residue polypeptide: Conotoxin Vc6.7 (81 aa).

The signal sequence occupies residues Met-1–Ala-19. A propeptide spanning residues Val-20–Trp-44 is cleaved from the precursor. 3 cysteine pairs are disulfide-bonded: Cys-49–Cys-63, Cys-56–Cys-67, and Cys-62–Cys-72.

The protein belongs to the conotoxin O2 superfamily. In terms of tissue distribution, expressed by the venom duct.

Its subcellular location is the secreted. Inhibits voltage-gated ion channels. The sequence is that of Conotoxin Vc6.7 from Conus victoriae (Queen Victoria cone).